The following is a 142-amino-acid chain: Large ribosomal subunit protein uL13 (142 aa).

This sequence belongs to the universal ribosomal protein uL13 family. In terms of assembly, part of the 50S ribosomal subunit.

In terms of biological role, this protein is one of the early assembly proteins of the 50S ribosomal subunit, although it is not seen to bind rRNA by itself. It is important during the early stages of 50S assembly. This is Large ribosomal subunit protein uL13 from Burkholderia mallei (strain NCTC 10247).